Reading from the N-terminus, the 30-residue chain is Acidic phospholipase A2 homolog cannitoxin gamma chain (30 aa).

In terms of assembly, heterotrimer of alpha, beta, and gamma chains; non-covalently linked. Glycosylated. In terms of tissue distribution, expressed by the venom gland.

It localises to the secreted. In terms of biological role, heterotrimer: Snake venom phospholipase A2 (PLA2) heterotrimer that acts as a potent presynaptic neurotoxin by blocking synaptic transmission and synaptic vesicle recycling. Enzymatic activity is essential for the neurotoxic effects. May act by binding in a calcium-dependent fashion to neurotonal pentraxin-1 (NPTX1) and neurotonal pentraxin-2 (NPTX2), but not to neuronal pentraxin receptor (NPTXR). Also binds to taipoxin-associated calcium binding protein 49 (RCN2), a protein localized in the lumen of endoplasmic reticulum. Monomer (gamma chain): Snake venom phospholipase A2 homolog that is neither toxic nor enzymatically active. Does not bind calcium. The sequence is that of Acidic phospholipase A2 homolog cannitoxin gamma chain from Oxyuranus scutellatus canni (Papuan taipan).